Consider the following 446-residue polypeptide: Glutamine synthetase (446 aa).

The 94-residue stretch at 14 to 107 (NNVKFLRFQF…IICDVYRKNG (94 aa)) folds into the GS beta-grasp domain. One can recognise a GS catalytic domain in the interval 114-446 (PRGCLKRVLA…DWEFNKYVRI (333 aa)). Positions 138 and 140 each coordinate Mg(2+). Glu187 contacts ATP. Mg(2+) is bound by residues Glu192 and Glu199. L-glutamate contacts are provided by residues 243–244 (NG) and Gly244. His248 serves as a coordination point for Mg(2+). Ser252 contributes to the ATP binding site. Residues Arg301, Glu307, and Arg319 each coordinate L-glutamate. ATP-binding residues include Arg319, Arg324, and Lys331. Position 336 (Glu336) interacts with Mg(2+). Residue Arg338 participates in L-glutamate binding.

The protein belongs to the glutamine synthetase family. In terms of assembly, oligomer of 12 subunits arranged in the form of two hexagons. It depends on Mg(2+) as a cofactor.

The protein localises to the cytoplasm. The enzyme catalyses L-glutamate + NH4(+) + ATP = L-glutamine + ADP + phosphate + H(+). Probably involved in nitrogen metabolism via ammonium assimilation. Catalyzes the ATP-dependent biosynthesis of glutamine from glutamate and ammonia. The sequence is that of Glutamine synthetase from Methanococcus voltae.